Consider the following 34-residue polypeptide: MEVNILAFIATTLFVLVPTAFLLIIYVKTVSQSD.

A helical transmembrane segment spans residues 5–25 (ILAFIATTLFVLVPTAFLLII).

The protein belongs to the PsbM family. PSII is composed of 1 copy each of membrane proteins PsbA, PsbB, PsbC, PsbD, PsbE, PsbF, PsbH, PsbI, PsbJ, PsbK, PsbL, PsbM, PsbT, PsbX, PsbY, PsbZ, Psb30/Ycf12, at least 3 peripheral proteins of the oxygen-evolving complex and a large number of cofactors. It forms dimeric complexes.

The protein resides in the plastid. Its subcellular location is the chloroplast thylakoid membrane. One of the components of the core complex of photosystem II (PSII). PSII is a light-driven water:plastoquinone oxidoreductase that uses light energy to abstract electrons from H(2)O, generating O(2) and a proton gradient subsequently used for ATP formation. It consists of a core antenna complex that captures photons, and an electron transfer chain that converts photonic excitation into a charge separation. This subunit is found at the monomer-monomer interface. This Citrus sinensis (Sweet orange) protein is Photosystem II reaction center protein M.